The chain runs to 154 residues: Myoglobin (154 aa).

The Globin domain occupies 2 to 148; the sequence is GLSDAEWQLV…FRNDIAAKYK (147 aa). A Phosphoserine modification is found at Ser4. His65 serves as a coordination point for nitrite. His65 is an O2 binding site. At Thr68 the chain carries Phosphothreonine. His94 serves as a coordination point for heme b.

This sequence belongs to the globin family. Monomeric.

It is found in the cytoplasm. The protein resides in the sarcoplasm. It catalyses the reaction Fe(III)-heme b-[protein] + nitric oxide + H2O = Fe(II)-heme b-[protein] + nitrite + 2 H(+). It carries out the reaction H2O2 + AH2 = A + 2 H2O. Monomeric heme protein which primary function is to store oxygen and facilitate its diffusion within muscle tissues. Reversibly binds oxygen through a pentacoordinated heme iron and enables its timely and efficient release as needed during periods of heightened demand. Depending on the oxidative conditions of tissues and cells, and in addition to its ability to bind oxygen, it also has a nitrite reductase activity whereby it regulates the production of bioactive nitric oxide. Under stress conditions, like hypoxia and anoxia, it also protects cells against reactive oxygen species thanks to its pseudoperoxidase activity. This is Myoglobin (MB) from Orycteropus afer (Aardvark).